A 352-amino-acid chain; its full sequence is Probable transcription factor At1g11510 (352 aa).

2 disordered regions span residues 1–132 (MSRR…GGEE) and 239–269 (MKSN…KNNC). Residues 56–66 (SGSDEETDSDS) are compositionally biased toward acidic residues. 3 stretches are compositionally biased toward basic and acidic residues: residues 89–101 (KTSE…RSLE), 117–132 (VSGE…GGEE), and 241–259 (SNEK…HELD).

Belongs to the GeBP family.

This is Probable transcription factor At1g11510 from Arabidopsis thaliana (Mouse-ear cress).